The primary structure comprises 302 residues: Ribosomal RNA small subunit methyltransferase A (302 aa).

Residues His15, Leu17, Gly42, Glu64, Asp89, and Asn109 each coordinate S-adenosyl-L-methionine. The disordered stretch occupies residues 275–302; that stretch reads DAASADGHDHGDGSGQGESSPGGARDQI.

This sequence belongs to the class I-like SAM-binding methyltransferase superfamily. rRNA adenine N(6)-methyltransferase family. RsmA subfamily.

Its subcellular location is the cytoplasm. It carries out the reaction adenosine(1518)/adenosine(1519) in 16S rRNA + 4 S-adenosyl-L-methionine = N(6)-dimethyladenosine(1518)/N(6)-dimethyladenosine(1519) in 16S rRNA + 4 S-adenosyl-L-homocysteine + 4 H(+). Specifically dimethylates two adjacent adenosines (A1518 and A1519) in the loop of a conserved hairpin near the 3'-end of 16S rRNA in the 30S particle. May play a critical role in biogenesis of 30S subunits. The polypeptide is Ribosomal RNA small subunit methyltransferase A (Parasynechococcus marenigrum (strain WH8102)).